Here is a 66-residue protein sequence, read N- to C-terminus: Large ribosomal subunit protein bL31 (66 aa).

Zn(2+)-binding residues include Cys16, Cys18, Cys36, and Cys39.

The protein belongs to the bacterial ribosomal protein bL31 family. Type A subfamily. As to quaternary structure, part of the 50S ribosomal subunit. It depends on Zn(2+) as a cofactor.

In terms of biological role, binds the 23S rRNA. In Nitratiruptor sp. (strain SB155-2), this protein is Large ribosomal subunit protein bL31.